A 122-amino-acid chain; its full sequence is UPF0231 protein VSAL_I2591 (122 aa).

It belongs to the UPF0231 family.

This Aliivibrio salmonicida (strain LFI1238) (Vibrio salmonicida (strain LFI1238)) protein is UPF0231 protein VSAL_I2591.